The following is a 427-amino-acid chain: GPI mannosyltransferase 2 (427 aa).

Transmembrane regions (helical) follow at residues 7-27, 119-139, 164-184, 197-217, 247-267, 318-338, 350-370, and 404-424; these read LTTV…FAPG, ATLL…ALTL, FLLA…GMLL, ITLA…FSVA, AVLF…YMHY, VPNF…TVYF, LVYI…VQII, and LYVN…ACFL.

This sequence belongs to the PIGV family.

It is found in the endoplasmic reticulum membrane. It functions in the pathway glycolipid biosynthesis; glycosylphosphatidylinositol-anchor biosynthesis. Mannosyltransferase involved in glycosylphosphatidylinositol-anchor biosynthesis. Transfers the second mannose to the glycosylphosphatidylinositol during GPI precursor assembly. The sequence is that of GPI mannosyltransferase 2 (GPI18) from Eremothecium gossypii (strain ATCC 10895 / CBS 109.51 / FGSC 9923 / NRRL Y-1056) (Yeast).